The sequence spans 540 residues: Probable H/ACA ribonucleoprotein complex subunit 4 (540 aa).

The segment at 1-24 is disordered; it reads MTTDKKSKSKSSEKSTQEVEQVIK. Catalysis depends on Asp109, which acts as the Nucleophile. The PUA domain maps to 280–355; that stretch reads YKRIVVKDSA…VVATIKRVIM (76 aa). Positions 414 to 540 are disordered; that stretch reads SPVESMNVDT…DKKEKKKSKN (127 aa). A coiled-coil region spans residues 448–494; the sequence is KKEKKDKKEKKKDSSDDESEEEKSSKKDKKEKKEKKEKKEKKSSKDD. Residues 473 to 489 show a composition bias toward basic residues; that stretch reads KKDKKEKKEKKEKKEKK. Composition is skewed to basic and acidic residues over residues 490–503 and 513–528; these read SSKD…SKKE and SDKD…DKKD. Positions 529-540 are enriched in basic residues; it reads KKDKKEKKKSKN.

It belongs to the pseudouridine synthase TruB family. As to quaternary structure, component of the small nucleolar ribonucleoprotein particles containing H/ACA-type snoRNAs (H/ACA snoRNPs).

It localises to the nucleus. The protein resides in the nucleolus. The enzyme catalyses a uridine in RNA = a pseudouridine in RNA. Functionally, plays a central role in ribosomal RNA processing. Probable catalytic subunit of H/ACA small nucleolar ribonucleoprotein (H/ACA snoRNP) complex, which catalyzes pseudouridylation of rRNA. This involves the isomerization of uridine such that the ribose is subsequently attached to C5, instead of the normal N1. Pseudouridine ('psi') residues may serve to stabilize the conformation of rRNAs. The polypeptide is Probable H/ACA ribonucleoprotein complex subunit 4 (nola4) (Dictyostelium discoideum (Social amoeba)).